The following is a 620-amino-acid chain: Protein regulator of cytokinesis 1 (620 aa).

The segment at 1-303 is required for the interaction with KIF4A; sequence MRRSEVLAEE…IEAIRVELVQ (303 aa). Residues 1 to 341 form a dimerization region; it reads MRRSEVLAEE…QLHDAEIVRL (341 aa). Coiled-coil stretches lie at residues 96-133, 211-304, and 383-463; these read ILQL…ELCE, SLEN…LVQY, and GNLL…TEML. Positions 342–466 are spectrin-fold; that stretch reads KNYYEVHKEL…QTETEMLYGS (125 aa). Over residues 446-459 the composition is skewed to basic and acidic residues; sequence AKQERQLKNKKQTE. Residues 446-488 form a disordered region; sequence AKQERQLKNKKQTETEMLYGSAPRTPSKRRGLAPNTPGKARKL. The tract at residues 467–620 is unstructured, Arg/Lys rich; it reads APRTPSKRRG…GILNSTNIQS (154 aa). 2 positions are modified to phosphothreonine; by CDK1: Thr470 and Thr481. Phosphoserine occurs at positions 513, 541, and 571. The tract at residues 517–545 is disordered; the sequence is RLPPSGSKPVAASTCSGKKTPRTGRHGAN. Thr578 is modified (phosphothreonine). Positions 600–620 are disordered; it reads LSKASKSDATSGILNSTNIQS. The span at 606–620 shows a compositional bias: polar residues; it reads SDATSGILNSTNIQS. Thr616 carries the post-translational modification Phosphothreonine; by PLK1.

This sequence belongs to the MAP65/ASE1 family. As to quaternary structure, homodimer. Interacts with the C-terminal Rho-GAP domain and the basic region of RACGAP1. The interaction with RACGAP1 inhibits its GAP activity towards CDC42 in vitro, which may be required for maintaining normal spindle morphology. Interacts (via N-terminus) with the C-terminus of CENPE (via C-terminus); the interaction occurs during late mitosis. Interacts (via N-terminus) with KIF4A (via C-terminus); the interaction is required for the progression of mitosis. Interacts (via N-terminus) with KIF23 (via C-terminus); the interaction occurs during late mitosis. Interacts with KIF14 and KIF20A. Interacts with PLK1. Interacts with KIF20B. Interacts with CCDC66. Post-translationally, phosphorylation by CDK1 in early mitosis holds PRC1 in an inactive monomeric state, during the metaphase to anaphase transition, PRC1 is dephosphorylated, promoting interaction with KIF4A, which then translocates PRC1 along mitotic spindles to the plus ends of antiparallel interdigitating microtubules. Dephosphorylation also promotes MT-bundling activity by allowing dimerization. Phosphorylation by CDK1 prevents PLK1-binding: upon degradation of CDK1 at anaphase and dephosphorylation, it is then phosphorylated by PLK1, leading to cytokinesis. In terms of tissue distribution, overexpressed in bladder cancer cells.

The protein localises to the nucleus. It is found in the cytoplasm. It localises to the cytoskeleton. Its subcellular location is the spindle pole. The protein resides in the midbody. The protein localises to the chromosome. Key regulator of cytokinesis that cross-links antiparrallel microtubules at an average distance of 35 nM. Essential for controlling the spatiotemporal formation of the midzone and successful cytokinesis. Required for KIF14 localization to the central spindle and midbody. Required to recruit PLK1 to the spindle. Stimulates PLK1 phosphorylation of RACGAP1 to allow recruitment of ECT2 to the central spindle. Acts as an oncogene for promoting bladder cancer cells proliferation, apoptosis inhibition and carcinogenic progression. This Homo sapiens (Human) protein is Protein regulator of cytokinesis 1.